The sequence spans 161 residues: Large ribosomal subunit protein bL9 (161 aa).

The protein belongs to the bacterial ribosomal protein bL9 family.

Binds to the 23S rRNA. In Protochlamydia amoebophila (strain UWE25), this protein is Large ribosomal subunit protein bL9.